Reading from the N-terminus, the 387-residue chain is Protein mab-21-like 3 (387 aa).

It belongs to the mab-21 family.

The chain is Protein mab-21-like 3 (mab21L3) from Danio rerio (Zebrafish).